The sequence spans 499 residues: Putative hydrolase YuaR (499 aa).

The first 26 residues, 1–26, serve as a signal peptide directing secretion; that stretch reads MRVIMKPLRRTLVFFIFSVFLCGTVS. In terms of domain architecture, AB hydrolase-1 spans 94–393; the sequence is GSVIIISGGP…DAFPAVNFER (300 aa). The Nucleophile role is filled by S207. Residue D433 is part of the active site. H460 (proton donor) is an active-site residue.

It belongs to the peptidase S33 family.

The polypeptide is Putative hydrolase YuaR (yuaR) (Escherichia coli (strain K12)).